Reading from the N-terminus, the 373-residue chain is C-C chemokine receptor type 2 (373 aa).

Topologically, residues 1-60 are extracellular; the sequence is MEDSNMLPQFIHGILSTSHSLFPRSIQELDEGATTPYDYDDGEPCHKTSVKQIGAWILPP. A helical transmembrane segment spans residues 61 to 81; it reads LYSLVFIFGFVGNMLVIIILI. The Cytoplasmic portion of the chain corresponds to 82 to 91; sequence SCKKLKSMTD. Residues 92–112 traverse the membrane as a helical segment; that stretch reads IYLFNLAISDLLFLLTLPFWA. At 113-128 the chain is on the extracellular side; sequence HYAANEWVFGNIMCKL. An intrachain disulfide couples cysteine 126 to cysteine 203. The chain crosses the membrane as a helical span at residues 129–149; sequence FTGLYHIGYFGGIFFIILLTI. Over 150–170 the chain is Cytoplasmic; that stretch reads DRYLAIVHAVFALKARTVTFG. Tyrosine 152 carries the phosphotyrosine; by JAK2 modification. Residues 171-191 form a helical membrane-spanning segment; that stretch reads VITSVVTWVVAVFASLPGIIF. Topologically, residues 192–220 are extracellular; that stretch reads TKSEQEDDQHTCGPYFPTIWKNFQTIMRN. Residues 221 to 241 traverse the membrane as a helical segment; that stretch reads ILSLILPLLVMVICYSGILHT. At 242–256 the chain is on the cytoplasmic side; that stretch reads LFRCRNEKKRHRAVR. A helical membrane pass occupies residues 257–277; the sequence is LIFAIMIVYFLFWTPYNIVLF. Topologically, residues 278 to 301 are extracellular; it reads LTTFQEFLGMSNCVVDMHLDQAMQ. A helical membrane pass occupies residues 302-322; the sequence is VTETLGMTHCCVNPIIYAFVG. The Cytoplasmic portion of the chain corresponds to 323-373; it reads EKFRRYLSIFFRKHIAKNLCKQCPVFYRETADRVSSTFTPSTGEQEVSVGL.

The protein belongs to the G-protein coupled receptor 1 family. Interacts with ARRB1. Interacts (via extracellular N-terminal region) with beta-defensin DEFB106A/DEFB106B; this interaction may preferentially require specific tyrosine sulfation on CCR2. Interacts with NUP85; the interaction is required for CCR2 clusters formation on the cell membrane and CCR2 signaling. Post-translationally, N-glycosylated. In terms of processing, sulfation increases the affinity for both monomeric and dimeric CCL2 with stronger binding to the monomeric form. Binding of sulfated CCR2 to CCL2 promotes conversion of CCL2 from dimer to monomer. Expressed in lung, spleen, kidney, thymus and macrophages.

The protein resides in the cell membrane. Its function is as follows. Key functional receptor for CCL2 but can also bind CCL7 and CCL12. Its binding with CCL2 on monocytes and macrophages mediates chemotaxis and migration induction through the activation of the PI3K cascade, the small G protein Rac and lamellipodium protrusion. Also acts as a receptor for the beta-defensin DEFB106A/DEFB106B. Regulates the expression of T-cell inflammatory cytokines and T-cell differentiation, promoting the differentiation of T-cells into T-helper 17 cells (Th17) during inflammation. Facilitates the export of mature thymocytes by enhancing directional movement of thymocytes to sphingosine-1-phosphate stimulation and up-regulation of S1P1R expression; signals through the JAK-STAT pathway to regulate FOXO1 activity leading to an increased expression of S1P1R. Plays an important role in mediating peripheral nerve injury-induced neuropathic pain. Increases NMDA-mediated synaptic transmission in both dopamine D1 and D2 receptor-containing neurons, which may be caused by MAPK/ERK-dependent phosphorylation of GRIN2B/NMDAR2B. Mediates the recruitment of macrophages and monocytes to the injury site following brain injury. This Rattus norvegicus (Rat) protein is C-C chemokine receptor type 2 (Ccr2).